The primary structure comprises 337 residues: UDP-3-O-acylglucosamine N-acyltransferase (337 aa).

The active-site Proton acceptor is the His238.

It belongs to the transferase hexapeptide repeat family. LpxD subfamily. In terms of assembly, homotrimer.

It carries out the reaction a UDP-3-O-[(3R)-3-hydroxyacyl]-alpha-D-glucosamine + a (3R)-hydroxyacyl-[ACP] = a UDP-2-N,3-O-bis[(3R)-3-hydroxyacyl]-alpha-D-glucosamine + holo-[ACP] + H(+). It participates in bacterial outer membrane biogenesis; LPS lipid A biosynthesis. Its function is as follows. Catalyzes the N-acylation of UDP-3-O-acylglucosamine using 3-hydroxyacyl-ACP as the acyl donor. Is involved in the biosynthesis of lipid A, a phosphorylated glycolipid that anchors the lipopolysaccharide to the outer membrane of the cell. The polypeptide is UDP-3-O-acylglucosamine N-acyltransferase (Xanthomonas oryzae pv. oryzae (strain KACC10331 / KXO85)).